Here is a 237-residue protein sequence, read N- to C-terminus: Ribosomal RNA small subunit methyltransferase G (237 aa).

Residues Gly78, Phe83, 129 to 130, and Arg148 each bind S-adenosyl-L-methionine; that span reads AE. The tract at residues 218-237 is disordered; it reads KKETPRKYPRKAGTPNKKPL.

Belongs to the methyltransferase superfamily. RNA methyltransferase RsmG family.

The protein localises to the cytoplasm. Specifically methylates the N7 position of a guanine in 16S rRNA. The sequence is that of Ribosomal RNA small subunit methyltransferase G from Streptococcus uberis (strain ATCC BAA-854 / 0140J).